The sequence spans 928 residues: Isoleucine--tRNA ligase (928 aa).

Residues 57–67 (PFANGNIHMGH) carry the 'HIGH' region motif. An L-isoleucyl-5'-AMP-binding site is contributed by glutamate 554. Positions 595–599 (KMSKS) match the 'KMSKS' region motif. Lysine 598 provides a ligand contact to ATP. Zn(2+) is bound by residues cysteine 887, cysteine 890, cysteine 907, and cysteine 910.

It belongs to the class-I aminoacyl-tRNA synthetase family. IleS type 1 subfamily. As to quaternary structure, monomer. It depends on Zn(2+) as a cofactor.

It is found in the cytoplasm. It catalyses the reaction tRNA(Ile) + L-isoleucine + ATP = L-isoleucyl-tRNA(Ile) + AMP + diphosphate. In terms of biological role, catalyzes the attachment of isoleucine to tRNA(Ile). As IleRS can inadvertently accommodate and process structurally similar amino acids such as valine, to avoid such errors it has two additional distinct tRNA(Ile)-dependent editing activities. One activity is designated as 'pretransfer' editing and involves the hydrolysis of activated Val-AMP. The other activity is designated 'posttransfer' editing and involves deacylation of mischarged Val-tRNA(Ile). The sequence is that of Isoleucine--tRNA ligase from Lactobacillus johnsonii (strain CNCM I-12250 / La1 / NCC 533).